A 188-amino-acid chain; its full sequence is UPF0398 protein OEOE_1093 (188 aa).

This sequence belongs to the UPF0398 family.

In Oenococcus oeni (strain ATCC BAA-331 / PSU-1), this protein is UPF0398 protein OEOE_1093.